The chain runs to 442 residues: Elongation factor 1-alpha (442 aa).

The region spanning 5–228 (KTHINIVVIG…DSVTPPERPV (224 aa)) is the tr-type G domain. Residues 14-21 (GHVDSGKS) are G1. GTP is bound at residue 14-21 (GHVDSGKS). The interval 70–74 (GITID) is G2. A G3 region spans residues 91–94 (DAPG). GTP contacts are provided by residues 91–95 (DAPGH) and 153–156 (NKMD). The tract at residues 153 to 156 (NKMD) is G4. Positions 192–194 (SGF) are G5.

It belongs to the TRAFAC class translation factor GTPase superfamily. Classic translation factor GTPase family. EF-Tu/EF-1A subfamily.

The protein localises to the cytoplasm. Its function is as follows. This protein promotes the GTP-dependent binding of aminoacyl-tRNA to the A-site of ribosomes during protein biosynthesis. In Entamoeba histolytica (strain ATCC 30459 / HM-1:IMSS / ABRM), this protein is Elongation factor 1-alpha.